The following is a 419-amino-acid chain: Protein phosphatase methylesterase 1 (419 aa).

Residues 1 to 12 (MSQLHRGMHKKP) are compositionally biased toward basic residues. Residues 1–75 (MSQLHRGMHK…KSAASPTVPA (75 aa)) are disordered. Positions 32–52 (TETEETVECTEEEEEQDETDG) are enriched in acidic residues. Catalysis depends on residues serine 230, aspartate 256, and histidine 383.

Belongs to the AB hydrolase superfamily.

The enzyme catalyses [phosphatase 2A protein]-C-terminal L-leucine methyl ester + H2O = [phosphatase 2A protein]-C-terminal L-leucine + methanol + H(+). In terms of biological role, demethylates proteins that have been reversibly carboxymethylated. Demethylates the phosphatase PP2A catalytic subunit. The sequence is that of Protein phosphatase methylesterase 1 (PPE1) from Yarrowia lipolytica (strain CLIB 122 / E 150) (Yeast).